Here is an 833-residue protein sequence, read N- to C-terminus: Leucine--tRNA ligase (833 aa).

The 'HIGH' region signature appears at P41–H52. Residues K610–S614 carry the 'KMSKS' region motif. K613 contributes to the ATP binding site.

Belongs to the class-I aminoacyl-tRNA synthetase family.

The protein resides in the cytoplasm. The catalysed reaction is tRNA(Leu) + L-leucine + ATP = L-leucyl-tRNA(Leu) + AMP + diphosphate. The chain is Leucine--tRNA ligase from Streptococcus pyogenes serotype M2 (strain MGAS10270).